The sequence spans 405 residues: GTPase Obg (405 aa).

One can recognise an Obg domain in the interval 1–159; that stretch reads MRFIDEAVVT…KVLKFELKVV (159 aa). The OBG-type G domain maps to 160 to 333; that stretch reads ADVGLIGLPN…IKYHLMNEIE (174 aa). Residues 166 to 173, 191 to 195, 213 to 216, 283 to 286, and 314 to 316 contribute to the GTP site; these read GLPNAGKS, FTTLV, DIPG, NKID, and ATL. Mg(2+) contacts are provided by Ser-173 and Thr-193. Residues 371–382 show a composition bias toward basic and acidic residues; sequence YRAARKAAREGT. The disordered stretch occupies residues 371 to 405; the sequence is YRAARKAAREGTDLSDDDFDGSDDDDDGVEVIYAP. Residues 383–399 are compositionally biased toward acidic residues; that stretch reads DLSDDDFDGSDDDDDGV.

It belongs to the TRAFAC class OBG-HflX-like GTPase superfamily. OBG GTPase family. Monomer. Mg(2+) is required as a cofactor.

It localises to the cytoplasm. An essential GTPase which binds GTP, GDP and possibly (p)ppGpp with moderate affinity, with high nucleotide exchange rates and a fairly low GTP hydrolysis rate. Plays a role in control of the cell cycle, stress response, ribosome biogenesis and in those bacteria that undergo differentiation, in morphogenesis control. The protein is GTPase Obg of Psychrobacter arcticus (strain DSM 17307 / VKM B-2377 / 273-4).